Reading from the N-terminus, the 1358-residue chain is DNA-directed RNA polymerase subunit beta (1358 aa).

Basic and acidic residues predominate over residues Gln-1033–Gly-1051. Residues Gln-1033–Leu-1053 form a disordered region.

The protein belongs to the RNA polymerase beta chain family. In terms of assembly, the RNAP catalytic core consists of 2 alpha, 1 beta, 1 beta' and 1 omega subunit. When a sigma factor is associated with the core the holoenzyme is formed, which can initiate transcription.

The catalysed reaction is RNA(n) + a ribonucleoside 5'-triphosphate = RNA(n+1) + diphosphate. Its function is as follows. DNA-dependent RNA polymerase catalyzes the transcription of DNA into RNA using the four ribonucleoside triphosphates as substrates. In Marinobacter nauticus (strain ATCC 700491 / DSM 11845 / VT8) (Marinobacter aquaeolei), this protein is DNA-directed RNA polymerase subunit beta.